The sequence spans 872 residues: C-mannosyltransferase dpy-19 homolog (872 aa).

The next 9 membrane-spanning stretches (helical) occupy residues 4–24, 126–146, 149–169, 179–199, 211–231, 257–277, 279–299, 326–346, and 399–419; these read PNLYVILSHALIGCGFFFLYV, FVWLMGGVTLLVLYLYGTLLS, IFGGIYGVISYLMFHSFVAKI, FAFPFIFLQMFYLCICIGRII, IFAMSLFTACALLSWQFSTFI, VLDYSLSHLLGHALAFVMSHG, SQLLLTWQLSISLFLFLITMV, FLMLTLLLASSVQTTLIELFN, and VKTMIVKPYCMYGVVMLAMFF. The stretch at 508-535 forms a coiled coil; sequence KRLRAQINRNSVKQRKERAQETKEAATD. The disordered stretch occupies residues 514–620; it reads INRNSVKQRK…RSSSRRSSVV (107 aa). Residues 524–533 are compositionally biased toward basic and acidic residues; it reads ERAQETKEAA. The segment covering 541-551 has biased composition (acidic residues); sequence TEEEDKDPEAE. Transmembrane regions (helical) follow at residues 627-647 and 678-698; these read ILNMHYVYSFLQMLVFTLIGL and NIFWSVSLAVFLLSMFDPGMV.

The protein belongs to the dpy-19 family.

The protein resides in the membrane. In terms of biological role, probable C-mannosyltransferase that mediates C-mannosylation of tryptophan residues on target proteins. The protein is C-mannosyltransferase dpy-19 homolog of Drosophila melanogaster (Fruit fly).